We begin with the raw amino-acid sequence, 271 residues long: Putative carboxymethylenebutenolidase (271 aa).

Residues Cys147, Asp204, and His236 contribute to the active site.

This sequence belongs to the dienelactone hydrolase family.

It catalyses the reaction 2-(5-oxo-2,5-dihydrofuran-2-ylidene)acetate + H2O = 4-oxohex-2-enedioate + H(+). This Escherichia coli (strain K12) protein is Putative carboxymethylenebutenolidase (ysgA).